The sequence spans 200 residues: uncharacterized protein (200 aa).

This is an uncharacterized protein from Bacillus subtilis (strain 168).